The chain runs to 2269 residues: Anaphase-promoting complex subunit 1 (2269 aa).

5 disordered regions span residues 305–334 (PSSN…QTIN), 379–433 (SSPP…QENS), 609–644 (NNNN…RKPL), 804–845 (KVYP…NNNN), and 1136–1197 (STAS…NSTS). 5 stretches are compositionally biased toward low complexity: residues 306–334 (SSNA…QTIN), 379–430 (SSPP…QQQQ), 609–638 (NNNN…NNNN), 809–845 (NNNN…NNNN), and 1136–1159 (STAS…GQSN). A compositionally biased stretch (polar residues) spans 1160 to 1177 (GLPMNSTTNQMNSHQINN). 2 PC repeats span residues 1440–1472 (AALM…PIND) and 1483–1520 (TAGM…ISKE). The tract at residues 1535 to 1586 (STPSISSNRNNNDLFNNGSNNNSSSNGGGGGGGGNNNGNNSNNGNNGSSQFK) is disordered. The segment covering 1540–1559 (SSNRNNNDLFNNGSNNNSSS) has biased composition (low complexity). Residues 1560 to 1570 (NGGGGGGGGNN) show a composition bias toward gly residues. Residues 1571-1583 (NGNNSNNGNNGSS) are compositionally biased toward low complexity. PC repeat units follow at residues 1605-1637 (GAII…GLNY), 1722-1756 (GAAF…RQVY), and 1792-1807 (LVMA…KILR). Residues 1960-1993 (NNNNNNNNNNNNNNNNNNNNNNNNNNNNNNNNNN) are compositionally biased toward low complexity. A disordered region spans residues 1960–1997 (NNNNNNNNNNNNNNNNNNNNNNNNNNNNNNNNNNKNIL).

This sequence belongs to the APC1 family. As to quaternary structure, the APC/C is composed of at least 13 subunits that stay tightly associated throughout the cell cycle: anapc1, anapc2, anapc3, anapc4, anapc5, anapc6, anapc7, anapc8, anapc10, anapc11, cdc20, cdc26 and cdh1.

It is found in the nucleus. It functions in the pathway protein modification; protein ubiquitination. In terms of biological role, component of the anaphase promoting complex/cyclosome (APC/C), a cell cycle-regulated E3 ubiquitin-protein ligase complex that controls progression through mitosis and the G1 phase of the cell cycle. This Dictyostelium discoideum (Social amoeba) protein is Anaphase-promoting complex subunit 1 (anapc1).